The sequence spans 388 residues: Chorismate synthase (388 aa).

The NADP(+) site is built by Arg-39 and Arg-45. Residues 132 to 134, 251 to 252, Gly-296, 311 to 315, and Arg-337 each bind FMN; these read RSS, NA, and KPIPT.

It belongs to the chorismate synthase family. As to quaternary structure, homotetramer. FMNH2 is required as a cofactor.

It catalyses the reaction 5-O-(1-carboxyvinyl)-3-phosphoshikimate = chorismate + phosphate. Its pathway is metabolic intermediate biosynthesis; chorismate biosynthesis; chorismate from D-erythrose 4-phosphate and phosphoenolpyruvate: step 7/7. Catalyzes the anti-1,4-elimination of the C-3 phosphate and the C-6 proR hydrogen from 5-enolpyruvylshikimate-3-phosphate (EPSP) to yield chorismate, which is the branch point compound that serves as the starting substrate for the three terminal pathways of aromatic amino acid biosynthesis. This reaction introduces a second double bond into the aromatic ring system. The protein is Chorismate synthase of Staphylococcus aureus (strain Mu50 / ATCC 700699).